The primary structure comprises 211 residues: Dual specificity protein phosphatase 26 (211 aa).

A Tyrosine-protein phosphatase domain is found at 60-207 (NHADEVWPGL…LLALDRRLRQ (148 aa)). Cys152 functions as the Phosphocysteine intermediate in the catalytic mechanism.

Belongs to the protein-tyrosine phosphatase family. Non-receptor class dual specificity subfamily. As to quaternary structure, interacts with HSF4.

It is found in the cytoplasm. The protein localises to the nucleus. Its subcellular location is the golgi apparatus. It catalyses the reaction O-phospho-L-tyrosyl-[protein] + H2O = L-tyrosyl-[protein] + phosphate. The catalysed reaction is O-phospho-L-seryl-[protein] + H2O = L-seryl-[protein] + phosphate. It carries out the reaction O-phospho-L-threonyl-[protein] + H2O = L-threonyl-[protein] + phosphate. In terms of biological role, inactivates MAPK1 and MAPK3 which leads to dephosphorylation of heat shock factor protein 4 and a reduction in its DNA-binding activity. This chain is Dual specificity protein phosphatase 26 (DUSP26), found in Pongo abelii (Sumatran orangutan).